The primary structure comprises 507 residues: ATP synthase subunit alpha, chloroplastic (507 aa).

Position 170-177 (170-177) interacts with ATP; it reads GDRQTGKT.

It belongs to the ATPase alpha/beta chains family. As to quaternary structure, F-type ATPases have 2 components, CF(1) - the catalytic core - and CF(0) - the membrane proton channel. CF(1) has five subunits: alpha(3), beta(3), gamma(1), delta(1), epsilon(1). CF(0) has four main subunits: a, b, b' and c.

The protein localises to the plastid. Its subcellular location is the chloroplast thylakoid membrane. The enzyme catalyses ATP + H2O + 4 H(+)(in) = ADP + phosphate + 5 H(+)(out). Its function is as follows. Produces ATP from ADP in the presence of a proton gradient across the membrane. The alpha chain is a regulatory subunit. The polypeptide is ATP synthase subunit alpha, chloroplastic (Liriodendron tulipifera (Tuliptree)).